Reading from the N-terminus, the 348-residue chain is MFKMVSSPHTHSSNLTAKFMLWVMVAMLPALGMQAYFFGYGVFIQVFIALLLAVAIEIAIAKLRRKLTAFYVADLSGVLTALILAMSIPPYAPYWIIVIGIIVALLLAKHSYGGLGQNLFNPAMVAYALLLVSFPVQMTGWLVPIDLLNEPPTFGDAISLVFSGVTSDGFSVHQLLGSVDGIAQATPLDSAKTSMQKLGVEGVLQSPIFSGLFANGWWQINLAFLAGGLLLIYKSIIHWQIPAAMLGMFALLSGLTDLLLPHTHLNVVSQLFSGAMMFGAFFIATDPVTASITPRGKLIFGGLIGLFVYLIRYYGNYPDAVAFSVLLANICVPLIDHYTQPRLYGSGR.

A run of 5 helical transmembrane segments spans residues 15–35 (LTAK…GMQA), 36–56 (YFFG…AVAI), 67–87 (LTAF…LAMS), 88–108 (IPPY…LLLA), and 125–145 (VAYA…LVPI). Thr186 carries the FMN phosphoryl threonine modification. The next 5 membrane-spanning stretches (helical) occupy residues 212-232 (LFAN…LLLI), 241-261 (IPAA…LLLP), 265-285 (LNVV…FIAT), 298-318 (LIFG…GNYP), and 320-340 (AVAF…HYTQ).

The protein belongs to the NqrB/RnfD family. As to quaternary structure, the complex is composed of six subunits: RnfA, RnfB, RnfC, RnfD, RnfE and RnfG. It depends on FMN as a cofactor.

It localises to the cell inner membrane. In terms of biological role, part of a membrane-bound complex that couples electron transfer with translocation of ions across the membrane. The sequence is that of Ion-translocating oxidoreductase complex subunit D from Actinobacillus pleuropneumoniae serotype 7 (strain AP76).